The sequence spans 189 residues: uncharacterized protein (189 aa).

An HTH tetR-type domain is found at 9–69; it reads ADTGGRILRA…SMLTSHIADV (61 aa). A DNA-binding region (H-T-H motif) is located at residues 32 to 51; sequence TLAEIARRAGVSRPTVYRRW.

This is an uncharacterized protein from Mycobacterium tuberculosis (strain CDC 1551 / Oshkosh).